A 412-amino-acid polypeptide reads, in one-letter code: Cathepsin D (412 aa).

An N-terminal signal peptide occupies residues 1-20 (MQPSSLLPLALCLLAAPASA). Positions 21–64 (LVRIPLHKFTSIRRTMSEVGGSVEDLIAKGPVSKYSQAVPAVTE) are cleaved as a propeptide — activation peptide. O-linked (GalNAc...) threonine glycosylation occurs at Thr-63. The region spanning 79 to 407 (YYGEIGIGTP…DRDNNRVGFA (329 aa)) is the Peptidase A1 domain. Intrachain disulfides connect Cys-91–Cys-160 and Cys-110–Cys-117. The active site involves Asp-97. Residues Asn-134 and Asn-263 are each glycosylated (N-linked (GlcNAc...) asparagine). A disulfide bridge links Cys-286 with Cys-290. The active site involves Asp-295. Cys-329 and Cys-366 are disulfide-bonded.

It belongs to the peptidase A1 family. As to quaternary structure, consists of a light chain and a heavy chain. Interacts with ADAM30; this leads to activation of CTSD. Interacts with GRN; stabilizes CTSD; increases its proteolytic activity. In terms of processing, N- and O-glycosylated. Undergoes proteolytic cleavage and activation by ADAM30. Post-translationally, as well as the major heavy chain which starts at Leu-169, 2 minor forms starting at Gly-170 and Gly-171 have been identified. An additional form starting at Ala-168 has also been identified. As to expression, expressed in the aorta extracellular space (at protein level). Expressed in liver (at protein level).

The protein localises to the lysosome. It is found in the melanosome. The protein resides in the secreted. It localises to the extracellular space. The enzyme catalyses Specificity similar to, but narrower than, that of pepsin A. Does not cleave the 4-Gln-|-His-5 bond in B chain of insulin.. Functionally, acid protease active in intracellular protein breakdown. Plays a role in APP processing following cleavage and activation by ADAM30 which leads to APP degradation. Involved in the pathogenesis of several diseases such as breast cancer and possibly Alzheimer disease. This is Cathepsin D (CTSD) from Homo sapiens (Human).